We begin with the raw amino-acid sequence, 1395 residues long: DNA-directed RNA polymerase subunit beta' (1395 aa).

Zn(2+) is bound by residues Cys70, Cys72, Cys85, and Cys88. Mg(2+)-binding residues include Asp470, Asp472, and Asp474. Zn(2+) is bound by residues Cys815, Cys889, Cys896, and Cys899.

This sequence belongs to the RNA polymerase beta' chain family. The RNAP catalytic core consists of 2 alpha, 1 beta, 1 beta' and 1 omega subunit. When a sigma factor is associated with the core the holoenzyme is formed, which can initiate transcription. The cofactor is Mg(2+). Zn(2+) is required as a cofactor.

It catalyses the reaction RNA(n) + a ribonucleoside 5'-triphosphate = RNA(n+1) + diphosphate. Its function is as follows. DNA-dependent RNA polymerase catalyzes the transcription of DNA into RNA using the four ribonucleoside triphosphates as substrates. The sequence is that of DNA-directed RNA polymerase subunit beta' from Anaeromyxobacter sp. (strain Fw109-5).